The primary structure comprises 380 residues: O-phospho-L-seryl-tRNA:Cys-tRNA synthase (380 aa).

Pyridoxal 5'-phosphate contacts are provided by residues Ala-86–Arg-87, Asn-192, and Ser-215–His-217. Lys-218 carries the post-translational modification N6-(pyridoxal phosphate)lysine.

The protein belongs to the SepCysS family. Homodimer. Interacts with SepRS. Requires pyridoxal 5'-phosphate as cofactor.

The catalysed reaction is O-phospho-L-seryl-tRNA(Cys) + hydrogen sulfide + H(+) = L-cysteinyl-tRNA(Cys) + phosphate. Its function is as follows. Converts O-phospho-L-seryl-tRNA(Cys) (Sep-tRNA(Cys)) to L-cysteinyl-tRNA(Cys) (Cys-tRNA(Cys)). The sequence is that of O-phospho-L-seryl-tRNA:Cys-tRNA synthase from Methanococcus maripaludis (strain DSM 14266 / JCM 13030 / NBRC 101832 / S2 / LL).